Here is a 323-residue protein sequence, read N- to C-terminus: Ribose-phosphate pyrophosphokinase (323 aa).

ATP is bound by residues 38–40 and 96–97; these read DGE and RQ. His-130 and Asp-170 together coordinate Mg(2+). Residue Lys-193 is part of the active site. Residues Arg-195, Asp-219, and 223-227 each bind D-ribose 5-phosphate; that span reads DTAGT.

Belongs to the ribose-phosphate pyrophosphokinase family. Class I subfamily. In terms of assembly, homohexamer. Requires Mg(2+) as cofactor.

Its subcellular location is the cytoplasm. It catalyses the reaction D-ribose 5-phosphate + ATP = 5-phospho-alpha-D-ribose 1-diphosphate + AMP + H(+). It functions in the pathway metabolic intermediate biosynthesis; 5-phospho-alpha-D-ribose 1-diphosphate biosynthesis; 5-phospho-alpha-D-ribose 1-diphosphate from D-ribose 5-phosphate (route I): step 1/1. Functionally, involved in the biosynthesis of the central metabolite phospho-alpha-D-ribosyl-1-pyrophosphate (PRPP) via the transfer of pyrophosphoryl group from ATP to 1-hydroxyl of ribose-5-phosphate (Rib-5-P). In Chlorobaculum tepidum (strain ATCC 49652 / DSM 12025 / NBRC 103806 / TLS) (Chlorobium tepidum), this protein is Ribose-phosphate pyrophosphokinase.